The chain runs to 348 residues: D-erythrose-4-phosphate dehydrogenase (348 aa).

NAD(+) contacts are provided by residues 12–13 (RI) and arginine 81. Substrate contacts are provided by residues 154-156 (SCT), arginine 200, 213-214 (TK), and arginine 236. The Nucleophile role is filled by cysteine 155. Asparagine 318 lines the NAD(+) pocket.

Belongs to the glyceraldehyde-3-phosphate dehydrogenase family. Epd subfamily. In terms of assembly, homotetramer.

The protein localises to the cytoplasm. It carries out the reaction D-erythrose 4-phosphate + NAD(+) + H2O = 4-phospho-D-erythronate + NADH + 2 H(+). The protein operates within cofactor biosynthesis; pyridoxine 5'-phosphate biosynthesis; pyridoxine 5'-phosphate from D-erythrose 4-phosphate: step 1/5. Its function is as follows. Catalyzes the NAD-dependent conversion of D-erythrose 4-phosphate to 4-phosphoerythronate. This Salmonella paratyphi A (strain ATCC 9150 / SARB42) protein is D-erythrose-4-phosphate dehydrogenase.